The chain runs to 557 residues: NADP-dependent malic enzyme (557 aa).

Tyrosine 91 serves as the catalytic Proton donor. Arginine 144 contributes to the NADP(+) binding site. Residue lysine 162 is the Proton acceptor of the active site. The a divalent metal cation site is built by glutamate 234, aspartate 235, and aspartate 258. NADP(+) contacts are provided by residues aspartate 258, 290 to 307 (GAGE…MAME), and asparagine 397.

This sequence belongs to the malic enzymes family. As to quaternary structure, homotetramer. Requires Mg(2+) as cofactor. The cofactor is Mn(2+).

It is found in the cytoplasm. The enzyme catalyses (S)-malate + NADP(+) = pyruvate + CO2 + NADPH. It catalyses the reaction oxaloacetate + H(+) = pyruvate + CO2. The chain is NADP-dependent malic enzyme (ME1) from Anas platyrhynchos (Mallard).